Here is a 69-residue protein sequence, read N- to C-terminus: Putative membrane protein insertion efficiency factor (69 aa).

This sequence belongs to the UPF0161 family.

The protein resides in the cell membrane. Its function is as follows. Could be involved in insertion of integral membrane proteins into the membrane. This chain is Putative membrane protein insertion efficiency factor, found in Clostridium botulinum (strain Kyoto / Type A2).